Consider the following 397-residue polypeptide: Glia-derived nexin (397 aa).

Residues 1–19 (MNWHFPFFILTTVTLSSVY) form the signal peptide. The N-linked (GlcNAc...) asparagine glycan is linked to Asn-159.

It belongs to the serpin family.

It localises to the secreted. Its subcellular location is the extracellular space. Functionally, serine protease inhibitor with activity toward thrombin, trypsin, and urokinase. Promotes neurite extension by inhibiting thrombin. Binds heparin. The protein is Glia-derived nexin (Serpine2) of Rattus norvegicus (Rat).